A 157-amino-acid chain; its full sequence is Transcription elongation factor GreA (157 aa).

Positions Glu-25–Leu-43 are enriched in basic and acidic residues. A disordered region spans residues Glu-25–Ala-47. Residues Leu-43–Asp-79 are a coiled coil.

This sequence belongs to the GreA/GreB family.

Necessary for efficient RNA polymerase transcription elongation past template-encoded arresting sites. The arresting sites in DNA have the property of trapping a certain fraction of elongating RNA polymerases that pass through, resulting in locked ternary complexes. Cleavage of the nascent transcript by cleavage factors such as GreA or GreB allows the resumption of elongation from the new 3'terminus. GreA releases sequences of 2 to 3 nucleotides. The polypeptide is Transcription elongation factor GreA (Amoebophilus asiaticus (strain 5a2)).